We begin with the raw amino-acid sequence, 665 residues long: DNA ligase (665 aa).

NAD(+)-binding positions include 35–39 (DAIYD), 88–89 (SL), and glutamate 117. Lysine 119 acts as the N6-AMP-lysine intermediate in catalysis. The NAD(+) site is built by arginine 140, glutamate 174, lysine 290, and lysine 314. Residues cysteine 406, cysteine 409, cysteine 424, and cysteine 429 each contribute to the Zn(2+) site. Residues 588-665 (KKTERFAQLS…EEAFNELLVS (78 aa)) enclose the BRCT domain.

Belongs to the NAD-dependent DNA ligase family. LigA subfamily. Mg(2+) is required as a cofactor. Mn(2+) serves as cofactor.

The enzyme catalyses NAD(+) + (deoxyribonucleotide)n-3'-hydroxyl + 5'-phospho-(deoxyribonucleotide)m = (deoxyribonucleotide)n+m + AMP + beta-nicotinamide D-nucleotide.. In terms of biological role, DNA ligase that catalyzes the formation of phosphodiester linkages between 5'-phosphoryl and 3'-hydroxyl groups in double-stranded DNA using NAD as a coenzyme and as the energy source for the reaction. It is essential for DNA replication and repair of damaged DNA. The polypeptide is DNA ligase (Metamycoplasma arthritidis (strain 158L3-1) (Mycoplasma arthritidis)).